A 292-amino-acid polypeptide reads, in one-letter code: Ribosomal protein L11 methyltransferase (292 aa).

Residues T143, G164, D186, and N228 each contribute to the S-adenosyl-L-methionine site.

The protein belongs to the methyltransferase superfamily. PrmA family.

It localises to the cytoplasm. The catalysed reaction is L-lysyl-[protein] + 3 S-adenosyl-L-methionine = N(6),N(6),N(6)-trimethyl-L-lysyl-[protein] + 3 S-adenosyl-L-homocysteine + 3 H(+). Its function is as follows. Methylates ribosomal protein L11. In Aeromonas salmonicida (strain A449), this protein is Ribosomal protein L11 methyltransferase.